A 100-amino-acid chain; its full sequence is Large ribosomal subunit protein uL23 (100 aa).

Belongs to the universal ribosomal protein uL23 family. As to quaternary structure, part of the 50S ribosomal subunit. Contacts protein L29, and trigger factor when it is bound to the ribosome.

In terms of biological role, one of the early assembly proteins it binds 23S rRNA. One of the proteins that surrounds the polypeptide exit tunnel on the outside of the ribosome. Forms the main docking site for trigger factor binding to the ribosome. This chain is Large ribosomal subunit protein uL23, found in Buchnera aphidicola subsp. Acyrthosiphon pisum (strain 5A).